Reading from the N-terminus, the 444-residue chain is Protein translocase subunit SecY (444 aa).

The next 10 helical transmembrane spans lie at F24–I44, I77–V97, G123–V143, M153–G173, I181–I201, V215–M235, M269–A289, Y318–F338, L376–W396, and F400–Q420.

The protein belongs to the SecY/SEC61-alpha family. Component of the Sec protein translocase complex. Heterotrimer consisting of SecY, SecE and SecG subunits. The heterotrimers can form oligomers, although 1 heterotrimer is thought to be able to translocate proteins. Interacts with the ribosome. Interacts with SecDF, and other proteins may be involved. Interacts with SecA.

It is found in the cell inner membrane. The central subunit of the protein translocation channel SecYEG. Consists of two halves formed by TMs 1-5 and 6-10. These two domains form a lateral gate at the front which open onto the bilayer between TMs 2 and 7, and are clamped together by SecE at the back. The channel is closed by both a pore ring composed of hydrophobic SecY resides and a short helix (helix 2A) on the extracellular side of the membrane which forms a plug. The plug probably moves laterally to allow the channel to open. The ring and the pore may move independently. The protein is Protein translocase subunit SecY of Vibrio cholerae serotype O1 (strain ATCC 39315 / El Tor Inaba N16961).